Reading from the N-terminus, the 290-residue chain is Porphobilinogen deaminase (290 aa).

At cysteine 237 the chain carries S-(dipyrrolylmethanemethyl)cysteine.

It belongs to the HMBS family. Monomer. It depends on dipyrromethane as a cofactor.

It carries out the reaction 4 porphobilinogen + H2O = hydroxymethylbilane + 4 NH4(+). It participates in porphyrin-containing compound metabolism; protoporphyrin-IX biosynthesis; coproporphyrinogen-III from 5-aminolevulinate: step 2/4. Its function is as follows. Tetrapolymerization of the monopyrrole PBG into the hydroxymethylbilane pre-uroporphyrinogen in several discrete steps. The chain is Porphobilinogen deaminase from Clostridium botulinum (strain Langeland / NCTC 10281 / Type F).